Here is a 122-residue protein sequence, read N- to C-terminus: uncharacterized protein (122 aa).

This is an uncharacterized protein from Bacillus subtilis (strain 168).